The following is a 126-amino-acid chain: Profilin (126 aa).

It belongs to the profilin family. Occurs in many kinds of cells as a complex with monomeric actin in a 1:1 ratio.

It is found in the cytoplasm. Its subcellular location is the cytoskeleton. In terms of biological role, binds to actin and affects the structure of the cytoskeleton. At high concentrations, profilin prevents the polymerization of actin, whereas it enhances it at low concentrations. By binding to PIP2, it inhibits the formation of IP3 and DG. The protein is Profilin of Branchiostoma belcheri (Amphioxus).